A 473-amino-acid chain; its full sequence is Cysteine--tRNA ligase (473 aa).

C30 serves as a coordination point for Zn(2+). The 'HIGH' region signature appears at M32–H42. The Zn(2+) site is built by C213, H238, and E242. Residues K270–S274 carry the 'KMSKS' region motif. ATP is bound at residue K273.

Belongs to the class-I aminoacyl-tRNA synthetase family. Monomer. Requires Zn(2+) as cofactor.

It localises to the cytoplasm. The enzyme catalyses tRNA(Cys) + L-cysteine + ATP = L-cysteinyl-tRNA(Cys) + AMP + diphosphate. This is Cysteine--tRNA ligase from Acinetobacter baumannii (strain AB307-0294).